The chain runs to 130 residues: Small ribosomal subunit protein uS9 (130 aa).

The protein belongs to the universal ribosomal protein uS9 family.

This Haemophilus influenzae (strain 86-028NP) protein is Small ribosomal subunit protein uS9.